Reading from the N-terminus, the 410-residue chain is Multifunctional CCA protein (410 aa).

Positions 8 and 11 each coordinate ATP. CTP-binding residues include Gly-8 and Arg-11. Residues Asp-21 and Asp-23 each coordinate Mg(2+). Positions 91, 138, and 141 each coordinate ATP. The CTP site is built by Arg-91, Arg-138, and Arg-141. The 119-residue stretch at 229–347 (TGIHQEMVSD…AQLALVCEAD (119 aa)) folds into the HD domain.

The protein belongs to the tRNA nucleotidyltransferase/poly(A) polymerase family. Bacterial CCA-adding enzyme type 1 subfamily. Monomer. Can also form homodimers and oligomers. The cofactor is Mg(2+). Ni(2+) serves as cofactor.

The catalysed reaction is a tRNA precursor + 2 CTP + ATP = a tRNA with a 3' CCA end + 3 diphosphate. It carries out the reaction a tRNA with a 3' CCA end + 2 CTP + ATP = a tRNA with a 3' CCACCA end + 3 diphosphate. Its function is as follows. Catalyzes the addition and repair of the essential 3'-terminal CCA sequence in tRNAs without using a nucleic acid template. Adds these three nucleotides in the order of C, C, and A to the tRNA nucleotide-73, using CTP and ATP as substrates and producing inorganic pyrophosphate. tRNA 3'-terminal CCA addition is required both for tRNA processing and repair. Also involved in tRNA surveillance by mediating tandem CCA addition to generate a CCACCA at the 3' terminus of unstable tRNAs. While stable tRNAs receive only 3'-terminal CCA, unstable tRNAs are marked with CCACCA and rapidly degraded. The polypeptide is Multifunctional CCA protein (Xanthomonas euvesicatoria pv. vesicatoria (strain 85-10) (Xanthomonas campestris pv. vesicatoria)).